An 82-amino-acid polypeptide reads, in one-letter code: ATP synthase subunit c, chloroplastic (82 aa).

2 consecutive transmembrane segments (helical) span residues 4–24 (IISAASVIAAGLSVGLAAIGP) and 57–77 (LAFMEALTIYGLVVALSLLFA).

The protein belongs to the ATPase C chain family. F-type ATPases have 2 components, F(1) - the catalytic core - and F(0) - the membrane proton channel. F(1) has five subunits: alpha(3), beta(3), gamma(1), delta(1), epsilon(1). F(0) has four main subunits: a(1), b(1), b'(1) and c(10-14). The alpha and beta chains form an alternating ring which encloses part of the gamma chain. F(1) is attached to F(0) by a central stalk formed by the gamma and epsilon chains, while a peripheral stalk is formed by the delta, b and b' chains.

It is found in the plastid. The protein localises to the chloroplast thylakoid membrane. Functionally, f(1)F(0) ATP synthase produces ATP from ADP in the presence of a proton or sodium gradient. F-type ATPases consist of two structural domains, F(1) containing the extramembraneous catalytic core and F(0) containing the membrane proton channel, linked together by a central stalk and a peripheral stalk. During catalysis, ATP synthesis in the catalytic domain of F(1) is coupled via a rotary mechanism of the central stalk subunits to proton translocation. Its function is as follows. Key component of the F(0) channel; it plays a direct role in translocation across the membrane. A homomeric c-ring of between 10-14 subunits forms the central stalk rotor element with the F(1) delta and epsilon subunits. The sequence is that of ATP synthase subunit c, chloroplastic from Heterosigma akashiwo (strain NIES-293 / 8280G21-1).